The following is a 325-amino-acid chain: GMP reductase (325 aa).

Cysteine 174 (thioimidate intermediate) is an active-site residue. 203 to 226 (LIADGGIRTHGDIAKSIRFGASMV) lines the NADP(+) pocket.

This sequence belongs to the IMPDH/GMPR family. GuaC type 2 subfamily.

The catalysed reaction is IMP + NH4(+) + NADP(+) = GMP + NADPH + 2 H(+). Its function is as follows. Catalyzes the irreversible NADPH-dependent deamination of GMP to IMP. It functions in the conversion of nucleobase, nucleoside and nucleotide derivatives of G to A nucleotides, and in maintaining the intracellular balance of A and G nucleotides. This Staphylococcus aureus (strain JH9) protein is GMP reductase.